We begin with the raw amino-acid sequence, 352 residues long: NAD-dependent protein deacetylase sirtuin-2 (352 aa).

S16 carries the post-translational modification Phosphoserine. Positions 20-301 (RLLDELTLEG…LALAELLGWK (282 aa)) constitute a Deacetylase sirtuin-type domain. NAD(+) is bound by residues 48-52 (AGIST) and 58-60 (DFR). S63 carries the phosphoserine modification. Residue 130-133 (QNID) coordinates NAD(+). The active-site Proton acceptor is H150. Zn(2+)-binding residues include C158 and C163. Residue S170 is modified to Phosphoserine. 2 residues coordinate Zn(2+): C184 and C187. NAD(+) contacts are provided by residues 225-226 (TS), 249-251 (NKE), and C287. A disordered region spans residues 314-352 (SIDAQSGAGVPNPSTSASPKKSPPPAKDEARTTEREKPQ). Low complexity predominate over residues 324-333 (PNPSTSASPK). S331 and S335 each carry phosphoserine. Over residues 339–352 (AKDEARTTEREKPQ) the composition is skewed to basic and acidic residues.

The protein belongs to the sirtuin family. Class I subfamily. Interacts with CDC20, FOXO3 and FZR1. Associates with microtubules in primary cortical mature neurons. Homotrimer. Interacts (via both phosphorylated, unphosphorylated, active or inactive forms) with HDAC6; the interaction is necessary for the complex to interact with alpha-tubulin, suggesting that these proteins belong to a large complex that deacetylates the cytoskeleton. Interacts with FOXO1; the interaction is disrupted upon serum-starvation or oxidative stress, leading to increased level of acetylated FOXO1 and induction of autophagy. Interacts with RELA; the interaction occurs in the cytoplasm and is increased in a TNF-alpha-dependent manner. Interacts with HOXA10; the interaction is direct. Interacts with YWHAB and YWHAG; the interactions occur in a AKT-dependent manner and increase SIRT2-dependent TP53 deacetylation. Interacts with MAPK1/ERK2 and MAPK3/ERK1; the interactions increase SIRT2 stability and deacetylation activity. Interacts (phosphorylated form) with KMT5A isoform 2; the interaction is direct, stimulates KMT5A-mediated methyltransferase activity on histone at 'Lys-20' (H4K20me1) and is increased in a H(2)O(2)-induced oxidative stress-dependent manner. Interacts with G6PD; the interaction is enhanced by H(2)O(2) treatment. Interacts with a G1/S-specific cyclin E-CDK2 complex. Interacts with AURKA, CDK5R1 (p35 form) and CDK5 and HIF1A. Interacts with the tRNA ligase SARS1; recruited to the VEGFA promoter via interaction with SARS1. Interacts with BEX4; negatively regulates alpha-tubulin deacetylation by SIRT2. Interacts with MORN3; the interaction enhances the ubiquitination of p53/TP53. The cofactor is Zn(2+). Post-translationally, phosphorylated at phosphoserine and phosphothreonine. Phosphorylated at Ser-331 by a mitotic kinase CDK1/cyclin B at the G2/M transition; phosphorylation regulates the delay in cell-cycle progression. Phosphorylated at Ser-331 by a mitotic kinase G1/S-specific cyclin E/Cdk2 complex; phosphorylation inactivates SIRT2-mediated alpha-tubulin deacetylation and thereby negatively regulates cell adhesion, cell migration and neurite outgrowth during neuronal differentiation. Phosphorylated by cyclin A/Cdk2 and p35-Cdk5 complexes and to a lesser extent by the cyclin D3/Cdk4 and cyclin B/Cdk1, in vitro. Dephosphorylated at Ser-331 by CDC14A and CDC14B around early anaphase. In terms of processing, acetylated by EP300; acetylation leads both to the decreased of SIRT2-mediated alpha-tubulin deacetylase activity and SIRT2-mediated down-regulation of TP53 transcriptional activity. Ubiquitinated.

Its subcellular location is the nucleus. It is found in the cytoplasm. The protein resides in the perinuclear region. The protein localises to the cytoskeleton. It localises to the microtubule organizing center. Its subcellular location is the centrosome. It is found in the centriole. The protein resides in the spindle. The protein localises to the midbody. It localises to the chromosome. Its subcellular location is the perikaryon. It is found in the cell projection. The protein resides in the growth cone. The protein localises to the myelin membrane. It catalyses the reaction N(6)-acetyl-L-lysyl-[protein] + NAD(+) + H2O = 2''-O-acetyl-ADP-D-ribose + nicotinamide + L-lysyl-[protein]. The enzyme catalyses N(6)-tetradecanoyl-L-lysyl-[protein] + NAD(+) + H2O = 2''-O-tetradecanoyl-ADP-D-ribose + nicotinamide + L-lysyl-[protein]. It carries out the reaction N(6)-hexadecanoyl-L-lysyl-[protein] + NAD(+) + H2O = 2''-O-hexadecanoyl-ADP-D-ribose + nicotinamide + L-lysyl-[protein]. With respect to regulation, inhibited by Sirtinol, A3 and M15 small molecules. Inhibited by nicotinamide. Inhibited by a macrocyclic peptide inhibitor S2iL5. Inhibited by EP300-induced acetylation. Functionally, NAD-dependent protein deacetylase, which deacetylates internal lysines on histone and alpha-tubulin as well as many other proteins such as key transcription factors. Participates in the modulation of multiple and diverse biological processes such as cell cycle control, genomic integrity, microtubule dynamics, cell differentiation, metabolic networks, and autophagy. Plays a major role in the control of cell cycle progression and genomic stability. Functions in the antephase checkpoint preventing precocious mitotic entry in response to microtubule stress agents, and hence allowing proper inheritance of chromosomes. Positively regulates the anaphase promoting complex/cyclosome (APC/C) ubiquitin ligase complex activity by deacetylating CDC20 and FZR1, then allowing progression through mitosis. Associates both with chromatin at transcriptional start sites (TSSs) and enhancers of active genes. Plays a role in cell cycle and chromatin compaction through epigenetic modulation of the regulation of histone H4 'Lys-20' methylation (H4K20me1) during early mitosis. Specifically deacetylates histone H4 at 'Lys-16' (H4K16ac) between the G2/M transition and metaphase enabling H4K20me1 deposition by KMT5A leading to ulterior levels of H4K20me2 and H4K20me3 deposition throughout cell cycle, and mitotic S-phase progression. Deacetylates KMT5A modulating KMT5A chromatin localization during the mitotic stress response. Also deacetylates histone H3 at 'Lys-57' (H3K56ac) during the mitotic G2/M transition. During oocyte meiosis progression, may deacetylate histone H4 at 'Lys-16' (H4K16ac) and alpha-tubulin, regulating spindle assembly and chromosome alignment by influencing microtubule dynamics and kinetochore function. Deacetylates histone H4 at 'Lys-16' (H4K16ac) at the VEGFA promoter and thereby contributes to regulate expression of VEGFA, a key regulator of angiogenesis. Deacetylates alpha-tubulin at 'Lys-40' and hence controls neuronal motility, oligodendroglial cell arbor projection processes and proliferation of non-neuronal cells. Phosphorylation at Ser-368 by a G1/S-specific cyclin E-CDK2 complex inactivates SIRT2-mediated alpha-tubulin deacetylation, negatively regulating cell adhesion, cell migration and neurite outgrowth during neuronal differentiation. Deacetylates PARD3 and participates in the regulation of Schwann cell peripheral myelination formation during early postnatal development and during postinjury remyelination. Involved in several cellular metabolic pathways. Plays a role in the regulation of blood glucose homeostasis by deacetylating and stabilizing phosphoenolpyruvate carboxykinase PCK1 activity in response to low nutrient availability. Acts as a key regulator in the pentose phosphate pathway (PPP) by deacetylating and activating the glucose-6-phosphate G6PD enzyme, and therefore, stimulates the production of cytosolic NADPH to counteract oxidative damage. Maintains energy homeostasis in response to nutrient deprivation as well as energy expenditure by inhibiting adipogenesis and promoting lipolysis. Attenuates adipocyte differentiation by deacetylating and promoting FOXO1 interaction to PPARG and subsequent repression of PPARG-dependent transcriptional activity. Plays a role in the regulation of lysosome-mediated degradation of protein aggregates by autophagy in neuronal cells. Deacetylates FOXO1 in response to oxidative stress or serum deprivation, thereby negatively regulating FOXO1-mediated autophagy. Deacetylates a broad range of transcription factors and co-regulators regulating target gene expression. Deacetylates transcriptional factor FOXO3 stimulating the ubiquitin ligase SCF(SKP2)-mediated FOXO3 ubiquitination and degradation. Deacetylates HIF1A and therefore promotes HIF1A degradation and inhibition of HIF1A transcriptional activity in tumor cells in response to hypoxia. Deacetylates RELA in the cytoplasm inhibiting NF-kappaB-dependent transcription activation upon TNF-alpha stimulation. Inhibits transcriptional activation by deacetylating p53/TP53 and EP300. Also deacetylates EIF5A. Functions as a negative regulator on oxidative stress-tolerance in response to anoxia-reoxygenation conditions. Plays a role as tumor suppressor. In addition to protein deacetylase activity, also has activity toward long-chain fatty acyl groups and mediates protein-lysine demyristoylation and depalmitoylation of target proteins, such as ARF6 and KRAS, thereby regulating their association with membranes. In Pongo abelii (Sumatran orangutan), this protein is NAD-dependent protein deacetylase sirtuin-2 (SIRT2).